The primary structure comprises 376 residues: MVHAPAKEAIPLLTPYKMGQLELSHRVVLAPLTRCRSYGHVPQPHAAVYYSQRATNGGLLIAEATVISPTAQGYPDTPGIYTQQQIEAWKPIVDAVHRKGALFFLQIWHVGRVSTTDFQPNGQAPISSTDKQITPDDSGMVYSKPRRLRTDEIPQIVDDFRRAARNAIESGFDGVEIHGAHGYLLDQFMKDSANDRTDEYGGNLENRCRFAVEVIDAVVAEVGAHRVGIRLSPFDNYMDCFDSNPVALGSYMVQQLNKHPGFLYCHMVEPGMAIVEGRRKITHGLLPFRKQFNGTFIAAGGYDREEGNKVVADGYADLVAYGRLFLANPDLPRRFELDAPLNRYDRSTFYTQDPVVGYTDYPFLEEIDEESTTTYA.

FMN-binding positions include 31–33, Ala64, and Gln106; that span reads PLT. 178 to 181 lines the substrate pocket; sequence HGAH. Tyr183 acts as the Proton donor in catalysis. FMN contacts are provided by residues Arg230, Gly301, and 322 to 323; that span reads GR.

It belongs to the NADH:flavin oxidoreductase/NADH oxidase family. FMN serves as cofactor.

In terms of biological role, putative oxophytodienoate reductase that may be involved in the biosynthesis or metabolism of oxylipin signaling molecules. This is Putative 12-oxophytodienoate reductase 2 (OPR2) from Oryza sativa subsp. japonica (Rice).